A 309-amino-acid polypeptide reads, in one-letter code: Putative S-adenosyl-L-methionine-dependent methyltransferase Mflv_0743 (309 aa).

S-adenosyl-L-methionine-binding positions include aspartate 134 and 163–164; that span reads DL.

This sequence belongs to the UPF0677 family.

Its function is as follows. Exhibits S-adenosyl-L-methionine-dependent methyltransferase activity. The sequence is that of Putative S-adenosyl-L-methionine-dependent methyltransferase Mflv_0743 from Mycolicibacterium gilvum (strain PYR-GCK) (Mycobacterium gilvum (strain PYR-GCK)).